Reading from the N-terminus, the 556-residue chain is Formate--tetrahydrofolate ligase (556 aa).

65-72 (TPAGEGKS) contacts ATP.

It belongs to the formate--tetrahydrofolate ligase family.

It carries out the reaction (6S)-5,6,7,8-tetrahydrofolate + formate + ATP = (6R)-10-formyltetrahydrofolate + ADP + phosphate. Its pathway is one-carbon metabolism; tetrahydrofolate interconversion. The chain is Formate--tetrahydrofolate ligase from Streptococcus equi subsp. equi (strain 4047).